Reading from the N-terminus, the 125-residue chain is Large ribosomal subunit protein bL12 (125 aa).

Belongs to the bacterial ribosomal protein bL12 family. As to quaternary structure, homodimer. Part of the ribosomal stalk of the 50S ribosomal subunit. Forms a multimeric L10(L12)X complex, where L10 forms an elongated spine to which 2 to 4 L12 dimers bind in a sequential fashion. Binds GTP-bound translation factors.

Its function is as follows. Forms part of the ribosomal stalk which helps the ribosome interact with GTP-bound translation factors. Is thus essential for accurate translation. The sequence is that of Large ribosomal subunit protein bL12 from Chlorobium phaeobacteroides (strain DSM 266 / SMG 266 / 2430).